The sequence spans 100 residues: Cytochrome b (100 aa).

The next 3 helical transmembrane spans lie at 1–21 (MGSL…FLAM), 45–66 (WLIR…YLHI), and 81–100 (WNIG…VGYV). Heme b contacts are provided by His-51 and His-65.

This sequence belongs to the cytochrome b family. As to quaternary structure, the cytochrome bc1 complex contains 3 respiratory subunits (MT-CYB, CYC1 and UQCRFS1), 2 core proteins (UQCRC1 and UQCRC2) and probably 6 low-molecular weight proteins. The cofactor is heme b.

Its subcellular location is the mitochondrion inner membrane. In terms of biological role, component of the ubiquinol-cytochrome c reductase complex (complex III or cytochrome b-c1 complex) that is part of the mitochondrial respiratory chain. The b-c1 complex mediates electron transfer from ubiquinol to cytochrome c. Contributes to the generation of a proton gradient across the mitochondrial membrane that is then used for ATP synthesis. This Polypterus sp. (Bichir) protein is Cytochrome b (mt-cyb).